The chain runs to 611 residues: MTVKLKKPKKYAVAKNATLLAAFGLIGSLSLAKANDELIKLEKEPGQWVMQNKNYANTRYSELNQINTKNVSRLRLAWSFSTGALRGHEGGPLVVGTTMYVHSAYPNHVYALDLTQKPYAIKWQYTPVQNSQAVAVACCDVVNRGLAYANGKIFMTTLDGQIIALDANTGKELWKMKHADVTKGETITGAPLVVKDKVLVGVSGGEFGVRGRVGAYDINTGNRVWLAYSQGPDEEVLLDSDFNKEFPQHGGPGDGTKTWPGEQWKLGGGTTWGWYSYDPALDLFYYGTSNPGTWNAEQRKGGDNKWSCTIFARRPDTGKARWAYQMTPWDSWDYDGVNEMILPDLTVKGKKTPCLVHFDRNGFGYVLDRRTGQLIEAQPFVYVNWAKEISKENDRPVEIPEKRTKQGVDTKGICPNSMGGKDQQPAAFSPQTGLFYVPTNNMCMNYEGVEATYTAGAPYVGANVLMYSGHEGKDDYYGAFICYDALKGKRVWEIHEHFPVWSGPVVTAGGLAFYGTMDGWFKAVDIKTGKVLWQQKLGSGIIGNPITFLGPDKKQYVAVYSGVGGWFGIAVAQNLPPDDPYAGLGAVGVAYQAGLPKATTVGGELYVFALE.

The first 34 residues, 1 to 34, serve as a signal peptide directing secretion; that stretch reads MTVKLKKPKKYAVAKNATLLAAFGLIGSLSLAKA. Cysteines 138 and 139 form a disulfide. The pyrroloquinoline quinone site is built by R144, T188, S203, G204, and G205. E206 is a binding site for Ce(3+). A Eu(3+)-binding site is contributed by E206. Residues T270 and W272 each contribute to the pyrroloquinoline quinone site. 3 residues coordinate Ce(3+): N290, D333, and D335. Eu(3+) is bound by residues N290, D333, and D335. R360 is a binding site for pyrroloquinoline quinone. An intrachain disulfide couples C414 to C443. Positions 501 and 566 each coordinate pyrroloquinoline quinone.

The protein belongs to the bacterial PQQ dehydrogenase family. In terms of assembly, homodimer. The cofactor is Ce(3+). La(3+) serves as cofactor. Nd(3+) is required as a cofactor. Requires Pr(3+) as cofactor. It depends on Eu(3+) as a cofactor. The cofactor is pyrroloquinoline quinone.

The protein resides in the periplasm. The catalysed reaction is 2 Fe(III)-[cytochrome cL] + methanol = 2 Fe(II)-[cytochrome cL] + formaldehyde + 2 H(+). The enzyme catalyses 4 Fe(III)-[cytochrome cL] + methanol + H2O = 4 Fe(II)-[cytochrome cL] + formate + 5 H(+). It carries out the reaction 2 Fe(III)-[cytochrome cL] + a primary alcohol = 2 Fe(II)-[cytochrome cL] + an aldehyde + 2 H(+). The protein operates within one-carbon metabolism; methanol degradation. Catalyzes the oxidation of methanol to formaldehyde or formate in the presence of lanthanides (Ln). Is a key enzyme in methane/methanol metabolism, allowing M.fumariolicum to grow on methane as the sole carbon and energy source. Can also act on other primary alcohols in vitro, such as ethanol, 1-propanol, 1-butanol, and 1-hexanol, but is not able to oxidize secondary alcohols and acetaldehyde. Uses a specific cytochrome cL, encoded by the adjacent gene in the locus, as electron acceptor. This is Lanthanide-dependent methanol dehydrogenase from Methylacidiphilum fumariolicum (strain SolV).